Here is a 200-residue protein sequence, read N- to C-terminus: Probable molybdenum cofactor guanylyltransferase (200 aa).

GTP-binding positions include 9-11 (LAG), Lys21, Asp69, and Asp100. Asp100 serves as a coordination point for Mg(2+).

It belongs to the MobA family. Requires Mg(2+) as cofactor.

It is found in the cytoplasm. The catalysed reaction is Mo-molybdopterin + GTP + H(+) = Mo-molybdopterin guanine dinucleotide + diphosphate. Functionally, transfers a GMP moiety from GTP to Mo-molybdopterin (Mo-MPT) cofactor (Moco or molybdenum cofactor) to form Mo-molybdopterin guanine dinucleotide (Mo-MGD) cofactor. This Bacillus cereus (strain ZK / E33L) protein is Probable molybdenum cofactor guanylyltransferase.